Reading from the N-terminus, the 492-residue chain is MSYMERESWSSNLGFILASVGSAIGLGNIWRFGYMVYTNGGGAFLIPYIVALLCVGIPLMILEFAIGHYTKKSAPLALEKLHKGSEWTGWFAVISGFIITSYYVVIIAWCLYYLIILVIYGYPSDPNAYFFHNILQISSGVEDIGGVSYGILVSTLAVWGIVALILSAGIKNGLEKANKIMIPFLLFLIILLVLNALTLPGALTGIEWYLTPDFSALFNYNVWLSAFSQIFFSLSLGFGILIAYASYLPKKSDLTINAVTVSLLNCGFSFLAGFAVFGTLGYMSYTSGIPLDKAVSEGIGLAFVTFPKALSLLPFASRLFGIVFFLALVFAGISSAVSIVEASVSAIIDKFSLSRKKALLAVLALFIIISPIFTTGAGLYYLDIIDHFASGYLLPIAAILEIIIAIWLFGGDKLREHVNKLSEIKLGVWWKYLAGVVSPIILTAVVFLDASNVLTSGYGGYKTTYVIFGALIIPLAFVVSVILQKMKTIKGW.

The next 12 membrane-spanning stretches (helical) occupy residues 13–33, 42–62, 97–117, 150–170, 180–200, 222–242, 258–278, 320–340, 359–379, 391–411, 428–448, and 463–483; these read LGFI…WRFG, GAFL…LMIL, FIIT…LIIL, GILV…SAGI, IMIP…LTLP, VWLS…GILI, AVTV…AVFG, FGIV…VSIV, LLAV…GAGL, GYLL…LFGG, VWWK…VVFL, and TTYV…SVIL.

The protein belongs to the sodium:neurotransmitter symporter (SNF) (TC 2.A.22) family.

The protein localises to the cell membrane. In terms of biological role, putative sodium-dependent transporter. This is an uncharacterized protein from Methanocaldococcus jannaschii (strain ATCC 43067 / DSM 2661 / JAL-1 / JCM 10045 / NBRC 100440) (Methanococcus jannaschii).